Reading from the N-terminus, the 118-residue chain is Mu-like prophage FluMu tail tube protein (118 aa).

The segment at 12–32 (RLNGKEWPSDNDGTLTPGGKE) is disordered.

It to phage Mu protein M.

The polypeptide is Mu-like prophage FluMu tail tube protein (Haemophilus influenzae (strain ATCC 51907 / DSM 11121 / KW20 / Rd)).